We begin with the raw amino-acid sequence, 286 residues long: Nucleotide-binding protein PSPA7_5038 (286 aa).

Residue 8–15 (GRSGSGKS) coordinates ATP. Position 60–63 (60–63 (DARN)) interacts with GTP.

Belongs to the RapZ-like family.

Displays ATPase and GTPase activities. This chain is Nucleotide-binding protein PSPA7_5038, found in Pseudomonas paraeruginosa (strain DSM 24068 / PA7) (Pseudomonas aeruginosa (strain PA7)).